Reading from the N-terminus, the 339-residue chain is MDANTEHPAVGYGKLGVLLVNLGTPDGTDVTSMRRYLREFLSDRRVIEWSRLFWYPILYGIVLNTRPRKVGKAYELIWNKDLNESWLRTYTRNQAALMAEAFGGQPQVVVDWAMRYGQPSIASRIEALQKAGCERILVFPLYPQYAAATTATVNDKAFEALLKMRWQPALRTVPPYHDDPVYIDALATSINKHLATLDWEPELVLASFHGIPKSYFEKGDPYYCQCQKTARLLREKLGWPQDRLQVTFQSRFGPEEWLQPYTDATVERLAKEGVKRIAVINPGFVSDCLETLEEIAGQAAESFHHNGGEKFAHIPCLNDSPEGMAVLNHVVRRELEGWL.

2 residues coordinate Fe cation: histidine 209 and glutamate 290.

This sequence belongs to the ferrochelatase family.

The protein localises to the cytoplasm. It carries out the reaction heme b + 2 H(+) = protoporphyrin IX + Fe(2+). Its pathway is porphyrin-containing compound metabolism; protoheme biosynthesis; protoheme from protoporphyrin-IX: step 1/1. In terms of biological role, catalyzes the ferrous insertion into protoporphyrin IX. In Rhizobium meliloti (strain 1021) (Ensifer meliloti), this protein is Ferrochelatase.